Reading from the N-terminus, the 71-residue chain is MAKQSAIEQDGSIIEALSNAMFRVELENGHIVIAHISGKMRMHYIKLLPGDKVKLEMSPYDLSKARITYRY.

The S1-like domain occupies 1-71 (MAKQSAIEQD…LSKARITYRY (71 aa)).

The protein belongs to the IF-1 family. As to quaternary structure, component of the 30S ribosomal translation pre-initiation complex which assembles on the 30S ribosome in the order IF-2 and IF-3, IF-1 and N-formylmethionyl-tRNA(fMet); mRNA recruitment can occur at any time during PIC assembly.

It localises to the cytoplasm. Functionally, one of the essential components for the initiation of protein synthesis. Stabilizes the binding of IF-2 and IF-3 on the 30S subunit to which N-formylmethionyl-tRNA(fMet) subsequently binds. Helps modulate mRNA selection, yielding the 30S pre-initiation complex (PIC). Upon addition of the 50S ribosomal subunit IF-1, IF-2 and IF-3 are released leaving the mature 70S translation initiation complex. This chain is Translation initiation factor IF-1, found in Flavobacterium johnsoniae (strain ATCC 17061 / DSM 2064 / JCM 8514 / BCRC 14874 / CCUG 350202 / NBRC 14942 / NCIMB 11054 / UW101) (Cytophaga johnsonae).